An 89-amino-acid chain; its full sequence is Small ribosomal subunit protein uS15 (89 aa).

This sequence belongs to the universal ribosomal protein uS15 family. In terms of assembly, part of the 30S ribosomal subunit. Forms a bridge to the 50S subunit in the 70S ribosome, contacting the 23S rRNA.

Its function is as follows. One of the primary rRNA binding proteins, it binds directly to 16S rRNA where it helps nucleate assembly of the platform of the 30S subunit by binding and bridging several RNA helices of the 16S rRNA. Forms an intersubunit bridge (bridge B4) with the 23S rRNA of the 50S subunit in the ribosome. The protein is Small ribosomal subunit protein uS15 of Chlorobium limicola (strain DSM 245 / NBRC 103803 / 6330).